The following is a 298-amino-acid chain: Putative enoyl-CoA reductase (298 aa).

The next 4 helical transmembrane spans lie at 162 to 182 (CVYY…PYYT), 189 to 209 (LVNA…AVHV), 229 to 249 (ILFS…WVAF), and 254 to 274 (SMLT…EWAV).

The protein belongs to the steroid 5-alpha reductase family.

The protein localises to the membrane. The protein operates within lipid metabolism; fatty acid biosynthesis. In terms of biological role, involved in the synthesis of fatty acids. The protein is Putative enoyl-CoA reductase of Trypanosoma brucei brucei (strain 927/4 GUTat10.1).